The following is a 92-amino-acid chain: UPF0223 protein EF_2462 (92 aa).

This sequence belongs to the UPF0223 family.

The polypeptide is UPF0223 protein EF_2462 (Enterococcus faecalis (strain ATCC 700802 / V583)).